We begin with the raw amino-acid sequence, 645 residues long: Chaperone protein DnaK (645 aa).

Thr201 is subject to Phosphothreonine; by autocatalysis. Low complexity predominate over residues Asn606–Ser629. The segment at Asn606 to Lys645 is disordered. Basic and acidic residues predominate over residues Lys630–Lys645.

The protein belongs to the heat shock protein 70 family.

Acts as a chaperone. This is Chaperone protein DnaK from Ehrlichia ruminantium (strain Gardel).